The primary structure comprises 85 residues: U4-theraphotoxin-Hhn1a (85 aa).

A signal peptide spans 1 to 22 (MKVTLIAILTCAAVLVLHTTAA). Positions 23-48 (EEFEAESQLMEVGMPDTELAAVDEER) are excised as a propeptide. 3 disulfides stabilise this stretch: Cys-52-Cys-66, Cys-56-Cys-77, and Cys-71-Cys-82.

The protein belongs to the neurotoxin 12 (Hwtx-2) family. 02 (Hwtx-2) subfamily. In terms of assembly, monomer. In terms of tissue distribution, expressed by the venom gland.

It localises to the secreted. Its function is as follows. Neurotoxin active on both insects and mammals. The polypeptide is U4-theraphotoxin-Hhn1a (Cyriopagopus hainanus (Chinese bird spider)).